The following is a 228-amino-acid chain: Cytochrome c oxidase subunit 2 (228 aa).

Residues 1-26 lie on the Mitochondrial intermembrane side of the membrane; it reads MSQWFQLGLQNGNSPLMEQLIFFHDH. A helical transmembrane segment spans residues 27 to 48; it reads ALLVVILITSLVGFFLAALFSN. Residues 49-62 lie on the Mitochondrial matrix side of the membrane; sequence KFLHRYLLDGQAIE. The chain crosses the membrane as a helical span at residues 63 to 82; the sequence is TVWTVIPAIILVAIALPSIR. Over 83–228 the chain is Mitochondrial intermembrane; it reads LLYLIDEIHN…FLKWLELQIS (146 aa). Cu cation contacts are provided by His161, Cys196, Glu198, Cys200, His204, and Met207. Residue Glu198 coordinates Mg(2+).

The protein belongs to the cytochrome c oxidase subunit 2 family. In terms of assembly, component of the cytochrome c oxidase (complex IV, CIV), a multisubunit enzyme composed of a catalytic core of 3 subunits and several supernumerary subunits. The complex exists as a monomer or a dimer and forms supercomplexes (SCs) in the inner mitochondrial membrane with ubiquinol-cytochrome c oxidoreductase (cytochrome b-c1 complex, complex III, CIII). The cofactor is Cu cation.

It localises to the mitochondrion inner membrane. The catalysed reaction is 4 Fe(II)-[cytochrome c] + O2 + 8 H(+)(in) = 4 Fe(III)-[cytochrome c] + 2 H2O + 4 H(+)(out). Functionally, component of the cytochrome c oxidase, the last enzyme in the mitochondrial electron transport chain which drives oxidative phosphorylation. The respiratory chain contains 3 multisubunit complexes succinate dehydrogenase (complex II, CII), ubiquinol-cytochrome c oxidoreductase (cytochrome b-c1 complex, complex III, CIII) and cytochrome c oxidase (complex IV, CIV), that cooperate to transfer electrons derived from NADH and succinate to molecular oxygen, creating an electrochemical gradient over the inner membrane that drives transmembrane transport and the ATP synthase. Cytochrome c oxidase is the component of the respiratory chain that catalyzes the reduction of oxygen to water. Electrons originating from reduced cytochrome c in the intermembrane space (IMS) are transferred via the dinuclear copper A center (CU(A)) of subunit 2 and heme A of subunit 1 to the active site in subunit 1, a binuclear center (BNC) formed by heme A3 and copper B (CU(B)). The BNC reduces molecular oxygen to 2 water molecules using 4 electrons from cytochrome c in the IMS and 4 protons from the mitochondrial matrix. The protein is Cytochrome c oxidase subunit 2 (COII) of Artemia franciscana (Brine shrimp).